Reading from the N-terminus, the 142-residue chain is Transcriptional regulator MraZ (142 aa).

SpoVT-AbrB domains are found at residues 5–51 (ASAL…PRPE) and 77–120 (AMDV…DAQT).

Belongs to the MraZ family. As to quaternary structure, forms oligomers.

The protein resides in the cytoplasm. It localises to the nucleoid. In Burkholderia mallei (strain NCTC 10247), this protein is Transcriptional regulator MraZ.